A 264-amino-acid polypeptide reads, in one-letter code: Thymidylate synthase 2 (264 aa).

DUMP is bound at residue R21. Residue H51 participates in (6R)-5,10-methylene-5,6,7,8-tetrahydrofolate binding. 126–127 (RR) lines the dUMP pocket. Residue C146 is the Nucleophile of the active site. Residues 166-169 (RSAD), N177, and 207-209 (HIY) contribute to the dUMP site. D169 is a binding site for (6R)-5,10-methylene-5,6,7,8-tetrahydrofolate. S263 lines the (6R)-5,10-methylene-5,6,7,8-tetrahydrofolate pocket.

The protein belongs to the thymidylate synthase family. Bacterial-type ThyA subfamily. Homodimer.

It localises to the cytoplasm. The catalysed reaction is dUMP + (6R)-5,10-methylene-5,6,7,8-tetrahydrofolate = 7,8-dihydrofolate + dTMP. The protein operates within pyrimidine metabolism; dTTP biosynthesis. In terms of biological role, catalyzes the reductive methylation of 2'-deoxyuridine-5'-monophosphate (dUMP) to 2'-deoxythymidine-5'-monophosphate (dTMP) while utilizing 5,10-methylenetetrahydrofolate (mTHF) as the methyl donor and reductant in the reaction, yielding dihydrofolate (DHF) as a by-product. This enzymatic reaction provides an intracellular de novo source of dTMP, an essential precursor for DNA biosynthesis. The chain is Thymidylate synthase 2 from Bacillus spizizenii (strain ATCC 23059 / NRRL B-14472 / W23) (Bacillus subtilis subsp. spizizenii).